Consider the following 742-residue polypeptide: uncharacterized protein (742 aa).

The disordered stretch occupies residues 167 to 471 (GIVPPEPWGH…AAGAAGGGGA (305 aa)). Over residues 205-218 (PAPPPSLFAPPPPS) the composition is skewed to pro residues. 2 stretches are compositionally biased toward polar residues: residues 318-331 (SPATSNEISSNAVS) and 358-368 (GSPQTLSTAPS). Pro residues predominate over residues 386-401 (TAGPAAPPTTGGPPAP). A compositionally biased stretch (low complexity) spans 421–432 (PLSGGVPGGAVP). Pro residues predominate over residues 433-447 (LGPPPTPPPAAPVTT). Residues 448–464 (PPLASGAPVAPTGAAAG) show a composition bias toward low complexity.

In terms of biological role, may be involved in the ESX-1 / type VII specialized secretion system (T7SS), which exports several proteins including EsxA and EsxB. Involved in DNA conjugation in the recipient strain. This is an uncharacterized protein from Mycolicibacterium smegmatis (strain MKD8) (Mycobacterium smegmatis).